Consider the following 515-residue polypeptide: Chromosomal replication initiator protein DnaA (515 aa).

Positions 1–89 (MVADQAVLSS…LLAISIDANL (89 aa)) are domain I, interacts with DnaA modulators. A domain II region spans residues 89-172 (LQPPRTPSSE…APPSTSAETS (84 aa)). Disordered regions lie at residues 90-130 (QPPR…SRRA) and 142-171 (PPAD…SAET). Composition is skewed to low complexity over residues 102–114 (SSLA…AAAP) and 143–160 (PADV…NGKP). The interval 173-389 (RLNDRYHFET…GALIRVTAFA (217 aa)) is domain III, AAA+ region. The ATP site is built by G217, G219, K220, and T221. Residues 390 to 515 (SLNRQTVDIE…NEIKRKQRGA (126 aa)) are domain IV, binds dsDNA.

It belongs to the DnaA family. In terms of assembly, oligomerizes as a right-handed, spiral filament on DNA at oriC.

It localises to the cytoplasm. Its function is as follows. Plays an essential role in the initiation and regulation of chromosomal replication. ATP-DnaA binds to the origin of replication (oriC) to initiate formation of the DNA replication initiation complex once per cell cycle. Binds the DnaA box (a 9 base pair repeat at the origin) and separates the double-stranded (ds)DNA. Forms a right-handed helical filament on oriC DNA; dsDNA binds to the exterior of the filament while single-stranded (ss)DNA is stabiized in the filament's interior. The ATP-DnaA-oriC complex binds and stabilizes one strand of the AT-rich DNA unwinding element (DUE), permitting loading of DNA polymerase. After initiation quickly degrades to an ADP-DnaA complex that is not apt for DNA replication. Binds acidic phospholipids. This Micrococcus luteus (strain ATCC 4698 / DSM 20030 / JCM 1464 / CCM 169 / CCUG 5858 / IAM 1056 / NBRC 3333 / NCIMB 9278 / NCTC 2665 / VKM Ac-2230) (Micrococcus lysodeikticus) protein is Chromosomal replication initiator protein DnaA.